The following is a 951-amino-acid chain: Leucine-rich repeat-containing G-protein coupled receptor 4 (951 aa).

The first 24 residues, 1–24, serve as a signal peptide directing secretion; sequence MPGPLRLLCFFALGLLGSAGPSGA. Residues 25–57 form the LRRNT domain; that stretch reads APPLCAAPCSCDGDRRVDCSGKGLTAVPEGLSA. The Extracellular portion of the chain corresponds to 25–544; it reads APPLCAAPCS…LLGSWMIRLT (520 aa). 2 cysteine pairs are disulfide-bonded: Cys29–Cys35 and Cys33–Cys43. LRR repeat units lie at residues 58–79, 82–103, 106–127, 130–151, 154–177, 178–199, 202–223, 226–247, 249–270, 273–294, 320–341, 344–365, 366–387, 390–411, and 414–435; these read FTQA…AFKN, FLEE…ALSG, ELKV…AIRG, ALQS…SFEG, QLRH…SNLP, TLQA…AFTN, SLVV…CFDG, NLET…IKAL, SLKE…AFAG, LLRT…AFHN, HLES…LCQN, MLRT…NGCR, ALEE…TFQG, SLRI…AFAK, and TITN…GLNG. An N-linked (GlcNAc...) asparagine glycan is attached at Asn68. Asn188 and Asn199 each carry an N-linked (GlcNAc...) asparagine glycan. Asn294 carries N-linked (GlcNAc...) asparagine glycosylation. A disulfide bond links Cys339 and Cys364. Intrachain disulfides connect Cys470/Cys522 and Cys471/Cys476. The disordered stretch occupies residues 487 to 512; the sequence is NSPQDHSVTKEKGATDAANATSTAES. Residues 501–510 show a composition bias toward low complexity; that stretch reads TDAANATSTA. Residue Asn505 is glycosylated (N-linked (GlcNAc...) asparagine). Residues 545–565 traverse the membrane as a helical segment; sequence VWFIFLVALLFNLLVILTVFA. The Cytoplasmic segment spans residues 566-575; it reads SCSSLPASKL. Residues 576–596 form a helical membrane-spanning segment; it reads FIGLISVSNLLMGIYTGILTF. Over 597–619 the chain is Extracellular; sequence LDAVSWGRFAEFGIWWETGSGCK. Cys618 and Cys693 are joined by a disulfide. Residues 620 to 640 form a helical membrane-spanning segment; the sequence is VAGSLAVFSSESAVFLLTLAA. The Cytoplasmic segment spans residues 641 to 661; it reads VERSVFAKDVMKNGKSSHLRQ. A helical membrane pass occupies residues 662–682; that stretch reads FQVAALVALLGAAIAGCFPLF. Residues 683 to 703 lie on the Extracellular side of the membrane; sequence HGGQYSASPLCLPFPTGETPS. Residues 704–724 traverse the membrane as a helical segment; sequence LGFTVTLVLLNSLAFLLMAII. At 725–756 the chain is on the cytoplasmic side; it reads YTKLYCNLEKEDPSENSQSSMIKHVAWLIFTN. Residues 757–777 traverse the membrane as a helical segment; the sequence is CIFFCPVAFFSFAPLITAISI. Residues 778 to 783 lie on the Extracellular side of the membrane; that stretch reads SPEIMK. The chain crosses the membrane as a helical span at residues 784-804; that stretch reads SVTLIFFPLPACLNPVLYVFF. The Cytoplasmic segment spans residues 805-951; sequence NPKFKDDWKL…YAYNLPRVRD (147 aa). Ser920 carries the post-translational modification Phosphoserine.

It belongs to the G-protein coupled receptor 1 family.

It localises to the cell membrane. Functionally, receptor for R-spondins that potentiates the canonical Wnt signaling pathway and is involved in the formation of various organs. Upon binding to R-spondins (RSPO1, RSPO2, RSPO3 or RSPO4), associates with phosphorylated LRP6 and frizzled receptors that are activated by extracellular Wnt receptors, triggering the canonical Wnt signaling pathway to increase expression of target genes. In contrast to classical G-protein coupled receptors, does not activate heterotrimeric G-proteins to transduce the signal. Its function as activator of the Wnt signaling pathway is required for the development of various organs, including liver, kidney, intestine, bone, reproductive tract and eye. May also act as a receptor for norrin (NDP), such results however require additional confirmation in vivo. Required during spermatogenesis to activate the Wnt signaling pathway in peritubular myoid cells. Required for the maintenance of intestinal stem cells and Paneth cell differentiation in postnatal intestinal crypts. Acts as a regulator of bone formation and remodeling. Involved in kidney development; required for maintaining the ureteric bud in an undifferentiated state. Involved in the development of the anterior segment of the eye. Required during erythropoiesis. Also acts as a negative regulator of innate immunity by inhibiting TLR2/TLR4 associated pattern-recognition and pro-inflammatory cytokine production. Plays an important role in regulating the circadian rhythms of plasma lipids, partially through regulating the rhythmic expression of MTTP. Required for proper development of GnRH neurons (gonadotropin-releasing hormone expressing neurons) that control the release of reproductive hormones from the pituitary gland. In Mus musculus (Mouse), this protein is Leucine-rich repeat-containing G-protein coupled receptor 4 (Lgr4).